Reading from the N-terminus, the 928-residue chain is Serine/threonine-protein kinase atg1 (928 aa).

The region spanning Tyr-6 to Ile-315 is the Protein kinase domain. ATP is bound by residues Ile-12–Val-20 and Lys-35. Asp-149 acts as the Proton acceptor in catalysis. Disordered regions lie at residues Pro-318–Arg-470 and Phe-544–Ala-571. Positions Thr-359 to Tyr-371 are enriched in basic and acidic residues. Polar residues predominate over residues Thr-437–Glu-452. Basic and acidic residues-rich tracts occupy residues Gln-459–Arg-470 and Ser-548–Tyr-564.

Belongs to the protein kinase superfamily. Ser/Thr protein kinase family. APG1/unc-51/ULK1 subfamily. Homodimer. Forms a ternary complex with ATG13 and ATG17.

Its subcellular location is the cytoplasm. The protein resides in the preautophagosomal structure membrane. The enzyme catalyses L-seryl-[protein] + ATP = O-phospho-L-seryl-[protein] + ADP + H(+). It carries out the reaction L-threonyl-[protein] + ATP = O-phospho-L-threonyl-[protein] + ADP + H(+). Serine/threonine protein kinase involved in the cytoplasm to vacuole transport (Cvt) and found to be essential in autophagy, where it is required for the formation of autophagosomes. Involved in the clearance of protein aggregates which cannot be efficiently cleared by the proteasome. Required for selective autophagic degradation of the nucleus (nucleophagy) as well as for mitophagy which contributes to regulate mitochondrial quantity and quality by eliminating the mitochondria to a basal level to fulfill cellular energy requirements and preventing excess ROS production. Also involved in endoplasmic reticulum-specific autophagic process, in selective removal of ER-associated degradation (ERAD) substrates. Plays a key role in ATG9 and ATG23 cycling through the pre-autophagosomal structure and is necessary to promote ATG18 binding to ATG9 through phosphorylation of ATG9. Catalyzes phosphorylation of ATG4, decreasing the interaction between ATG4 and ATG8 and impairing deconjugation of PE-conjugated forms of ATG8. The sequence is that of Serine/threonine-protein kinase atg1 from Aspergillus clavatus (strain ATCC 1007 / CBS 513.65 / DSM 816 / NCTC 3887 / NRRL 1 / QM 1276 / 107).